A 182-amino-acid chain; its full sequence is Protein GrpE (182 aa).

A disordered region spans residues 1 to 37; that stretch reads MSDSSKERKKKFTGMVNKQKSEDQQNNSKQADDLDEL.

The protein belongs to the GrpE family. Homodimer.

It is found in the cytoplasm. Its function is as follows. Participates actively in the response to hyperosmotic and heat shock by preventing the aggregation of stress-denatured proteins, in association with DnaK and GrpE. It is the nucleotide exchange factor for DnaK and may function as a thermosensor. Unfolded proteins bind initially to DnaJ; upon interaction with the DnaJ-bound protein, DnaK hydrolyzes its bound ATP, resulting in the formation of a stable complex. GrpE releases ADP from DnaK; ATP binding to DnaK triggers the release of the substrate protein, thus completing the reaction cycle. Several rounds of ATP-dependent interactions between DnaJ, DnaK and GrpE are required for fully efficient folding. In Wolbachia sp. subsp. Brugia malayi (strain TRS), this protein is Protein GrpE.